The following is a 188-amino-acid chain: Elongation factor P-like protein (188 aa).

This sequence belongs to the elongation factor P family.

This chain is Elongation factor P-like protein, found in Xanthomonas euvesicatoria pv. vesicatoria (strain 85-10) (Xanthomonas campestris pv. vesicatoria).